Here is a 290-residue protein sequence, read N- to C-terminus: Glycine--tRNA ligase alpha subunit (290 aa).

The protein belongs to the class-II aminoacyl-tRNA synthetase family. As to quaternary structure, tetramer of two alpha and two beta subunits.

Its subcellular location is the cytoplasm. It carries out the reaction tRNA(Gly) + glycine + ATP = glycyl-tRNA(Gly) + AMP + diphosphate. This is Glycine--tRNA ligase alpha subunit from Syntrophobacter fumaroxidans (strain DSM 10017 / MPOB).